Reading from the N-terminus, the 297-residue chain is Homoserine kinase (297 aa).

ATP is bound at residue 82–92 (PLTRGLGSSAS).

Belongs to the GHMP kinase family. Homoserine kinase subfamily.

It localises to the cytoplasm. The catalysed reaction is L-homoserine + ATP = O-phospho-L-homoserine + ADP + H(+). It functions in the pathway amino-acid biosynthesis; L-threonine biosynthesis; L-threonine from L-aspartate: step 4/5. Functionally, catalyzes the ATP-dependent phosphorylation of L-homoserine to L-homoserine phosphate. The sequence is that of Homoserine kinase from Bacillus cereus (strain ZK / E33L).